A 1172-amino-acid polypeptide reads, in one-letter code: DNA-directed RNA polymerase subunit beta (1172 aa).

The protein belongs to the RNA polymerase beta chain family. As to quaternary structure, the RNAP catalytic core consists of 2 alpha, 1 beta, 1 beta' and 1 omega subunit. When a sigma factor is associated with the core the holoenzyme is formed, which can initiate transcription.

It catalyses the reaction RNA(n) + a ribonucleoside 5'-triphosphate = RNA(n+1) + diphosphate. Its function is as follows. DNA-dependent RNA polymerase catalyzes the transcription of DNA into RNA using the four ribonucleoside triphosphates as substrates. In Thermosipho melanesiensis (strain DSM 12029 / CIP 104789 / BI429), this protein is DNA-directed RNA polymerase subunit beta.